We begin with the raw amino-acid sequence, 142 residues long: Hemoglobin subunit alpha-1 (142 aa).

The Globin domain maps to 2–142 (KLTAEDKHNV…VAYVLASKYR (141 aa)). Residue His-59 coordinates O2. A heme b-binding site is contributed by His-88.

Belongs to the globin family. Major hemoglobin is a heterotetramer of two alpha-1 chains and two beta-1 chains. Red blood cells.

Involved in oxygen transport from the lung to the various peripheral tissues. The protein is Hemoglobin subunit alpha-1 of Pleurodeles waltl (Iberian ribbed newt).